The chain runs to 290 residues: Shikimate dehydrogenase (NADP(+)) (290 aa).

Residues 24–26 and Thr-71 contribute to the shikimate site; that span reads SKS. Lys-75 functions as the Proton acceptor in the catalytic mechanism. Shikimate is bound by residues Asn-96 and Asp-111. NADP(+) contacts are provided by residues 135-139, 159-164, and Ile-228; these read GAGGA and NRTKQR. Residue Tyr-230 participates in shikimate binding. An NADP(+)-binding site is contributed by Gly-251.

The protein belongs to the shikimate dehydrogenase family. In terms of assembly, homodimer.

The enzyme catalyses shikimate + NADP(+) = 3-dehydroshikimate + NADPH + H(+). It functions in the pathway metabolic intermediate biosynthesis; chorismate biosynthesis; chorismate from D-erythrose 4-phosphate and phosphoenolpyruvate: step 4/7. Its function is as follows. Involved in the biosynthesis of the chorismate, which leads to the biosynthesis of aromatic amino acids. Catalyzes the reversible NADPH linked reduction of 3-dehydroshikimate (DHSA) to yield shikimate (SA). The protein is Shikimate dehydrogenase (NADP(+)) of Bartonella tribocorum (strain CIP 105476 / IBS 506).